The chain runs to 325 residues: L-lactate dehydrogenase 1 (325 aa).

NAD(+) is bound by residues Val17, Asp38, Lys43, Tyr68, and 82–83 (GA). Residues Gln85, Arg91, and 123–126 (NPVD) contribute to the substrate site. NAD(+)-binding positions include 121–123 (AAN) and Ser146. 151–154 (DTAR) is a substrate binding site. Residues Arg156 and His171 each contribute to the beta-D-fructose 1,6-bisphosphate site. The active-site Proton acceptor is His178. Tyr223 carries the post-translational modification Phosphotyrosine. Thr232 provides a ligand contact to substrate.

This sequence belongs to the LDH/MDH superfamily. LDH family. As to quaternary structure, homotetramer.

Its subcellular location is the cytoplasm. The enzyme catalyses (S)-lactate + NAD(+) = pyruvate + NADH + H(+). The protein operates within fermentation; pyruvate fermentation to lactate; (S)-lactate from pyruvate: step 1/1. Allosterically activated by fructose 1,6-bisphosphate (FBP). Catalyzes the conversion of lactate to pyruvate. In Lactococcus lactis subsp. lactis (strain IL1403) (Streptococcus lactis), this protein is L-lactate dehydrogenase 1.